A 181-amino-acid chain; its full sequence is Dual-action ribosomal maturation protein DarP (181 aa).

The protein belongs to the DarP family.

It is found in the cytoplasm. Functionally, member of a network of 50S ribosomal subunit biogenesis factors which assembles along the 30S-50S interface, preventing incorrect 23S rRNA structures from forming. Promotes peptidyl transferase center (PTC) maturation. The polypeptide is Dual-action ribosomal maturation protein DarP (Actinobacillus succinogenes (strain ATCC 55618 / DSM 22257 / CCUG 43843 / 130Z)).